The following is a 262-amino-acid chain: Translation initiation factor 2 subunit alpha (262 aa).

The 72-residue stretch at 15 to 86 (GELVVGTVHK…RKGHVDVSMK (72 aa)) folds into the S1 motif domain.

It belongs to the eIF-2-alpha family. In terms of assembly, heterotrimer composed of an alpha, a beta and a gamma chain.

Functionally, eIF-2 functions in the early steps of protein synthesis by forming a ternary complex with GTP and initiator tRNA. This chain is Translation initiation factor 2 subunit alpha (eif2a), found in Methanothermobacter thermautotrophicus (strain ATCC 29096 / DSM 1053 / JCM 10044 / NBRC 100330 / Delta H) (Methanobacterium thermoautotrophicum).